Here is a 431-residue protein sequence, read N- to C-terminus: Histidine--tRNA ligase (431 aa).

Belongs to the class-II aminoacyl-tRNA synthetase family. As to quaternary structure, homodimer.

It localises to the cytoplasm. It catalyses the reaction tRNA(His) + L-histidine + ATP = L-histidyl-tRNA(His) + AMP + diphosphate + H(+). In Neisseria meningitidis serogroup C (strain 053442), this protein is Histidine--tRNA ligase.